The sequence spans 477 residues: MSHQSELIAGDILEYLSQHENKDMLRFITCGSVDDGKSTLIGRLLHDSKLIFEDQLAAIERDSKKYNTTDQDIDLALLVDGLQAEREQGITIDVAYRYFSTDKRKFIIADCPGHEQYTRNMATGASTSNLAIILIDARRGVQTQTRRHSYIVSLLGIRHVIVAVNKMDLVDYSEDVYNRIRDEYLTFAEHLDIPDIHFVPISALRGDNVVSRTEAAPWYQGATLMHLLETVQISHDAPLSAFRLPVQYVNRPNLDFRGFCGTIASGAVHPGDAVVALPSGKESRVKEIVTFDGSLSRAGAGQAVTLTLEDEIDISRGDMLVRADEARPHVSRSFDAHLVAMGEAPLRPGKEYGFKLAGKYVTGRIEAILHRTDVNTLQDSPADALALNEIGLCRISLNSPAAFDAYRDCRGSGSLILIDRLSNGTVAAGMIVAQSEEASPAALSPWALFEQELDQLLQRYFPQMTRAELARRLRDEL.

One can recognise a tr-type G domain in the interval 22 to 239 (KDMLRFITCG…TVQISHDAPL (218 aa)). The G1 stretch occupies residues 31–38 (GSVDDGKS). 31 to 38 (GSVDDGKS) is a GTP binding site. The tract at residues 89-93 (GITID) is G2. Residues 110 to 113 (DCPG) form a G3 region. GTP contacts are provided by residues 110–114 (DCPGH) and 165–168 (NKMD). The interval 165–168 (NKMD) is G4. Residues 202–204 (SAL) are G5.

This sequence belongs to the TRAFAC class translation factor GTPase superfamily. Classic translation factor GTPase family. CysN/NodQ subfamily. Heterodimer composed of CysD, the smaller subunit, and CysN.

The catalysed reaction is sulfate + ATP + H(+) = adenosine 5'-phosphosulfate + diphosphate. Its pathway is sulfur metabolism; hydrogen sulfide biosynthesis; sulfite from sulfate: step 1/3. Its function is as follows. With CysD forms the ATP sulfurylase (ATPS) that catalyzes the adenylation of sulfate producing adenosine 5'-phosphosulfate (APS) and diphosphate, the first enzymatic step in sulfur assimilation pathway. APS synthesis involves the formation of a high-energy phosphoric-sulfuric acid anhydride bond driven by GTP hydrolysis by CysN coupled to ATP hydrolysis by CysD. This Chromobacterium violaceum (strain ATCC 12472 / DSM 30191 / JCM 1249 / CCUG 213 / NBRC 12614 / NCIMB 9131 / NCTC 9757 / MK) protein is Sulfate adenylyltransferase subunit 1.